We begin with the raw amino-acid sequence, 403 residues long: Argininosuccinate synthase (403 aa).

9–17 is an ATP binding site; that stretch reads AYSGGLDTS. Tyrosine 86 provides a ligand contact to L-citrulline. Residue glycine 116 participates in ATP binding. L-aspartate is bound by residues threonine 118, asparagine 122, and aspartate 123. Asparagine 122 contacts L-citrulline. The L-citrulline site is built by arginine 126, serine 174, serine 183, glutamate 259, and tyrosine 271.

It belongs to the argininosuccinate synthase family. Type 1 subfamily. As to quaternary structure, homotetramer.

The protein resides in the cytoplasm. It catalyses the reaction L-citrulline + L-aspartate + ATP = 2-(N(omega)-L-arginino)succinate + AMP + diphosphate + H(+). Its pathway is amino-acid biosynthesis; L-arginine biosynthesis; L-arginine from L-ornithine and carbamoyl phosphate: step 2/3. This chain is Argininosuccinate synthase, found in Shouchella clausii (strain KSM-K16) (Alkalihalobacillus clausii).